A 158-amino-acid chain; its full sequence is Transcription factor BTF3 homolog 4 (158 aa).

The NAC-A/B domain maps to 33–98; that stretch reads TADDKKLQSS…AEAKPITEML (66 aa). Residues 124–158 form a disordered region; the sequence is VLDSKAPKSEDIDEEDDDVPDLAENFDEASKNEAN. Residues 134-150 are compositionally biased toward acidic residues; sequence DIDEEDDDVPDLAENFD.

It belongs to the NAC-beta family.

The protein is Transcription factor BTF3 homolog 4 (BTF3L4) of Gallus gallus (Chicken).